The following is a 130-amino-acid chain: Small ribosomal subunit protein uS8 (130 aa).

It belongs to the universal ribosomal protein uS8 family. As to quaternary structure, part of the 30S ribosomal subunit. Contacts proteins S5 and S12.

In terms of biological role, one of the primary rRNA binding proteins, it binds directly to 16S rRNA central domain where it helps coordinate assembly of the platform of the 30S subunit. This Stutzerimonas stutzeri (strain A1501) (Pseudomonas stutzeri) protein is Small ribosomal subunit protein uS8.